Here is a 436-residue protein sequence, read N- to C-terminus: Ribulose bisphosphate carboxylase large chain (436 aa).

Substrate-binding residues include asparagine 104 and threonine 154. The Proton acceptor role is filled by lysine 156. Lysine 158 provides a ligand contact to substrate. Residues lysine 182, aspartate 184, and glutamate 185 each coordinate Mg(2+). At lysine 182 the chain carries N6-carboxylysine. Histidine 275 acts as the Proton acceptor in catalysis. Residues arginine 276, histidine 308, and serine 360 each coordinate substrate.

It belongs to the RuBisCO large chain family. Type I subfamily. Heterohexadecamer of 8 large chains and 8 small chains. It depends on Mg(2+) as a cofactor.

The protein localises to the plastid. Its subcellular location is the chloroplast. The catalysed reaction is 2 (2R)-3-phosphoglycerate + 2 H(+) = D-ribulose 1,5-bisphosphate + CO2 + H2O. The enzyme catalyses D-ribulose 1,5-bisphosphate + O2 = 2-phosphoglycolate + (2R)-3-phosphoglycerate + 2 H(+). RuBisCO catalyzes two reactions: the carboxylation of D-ribulose 1,5-bisphosphate, the primary event in carbon dioxide fixation, as well as the oxidative fragmentation of the pentose substrate in the photorespiration process. Both reactions occur simultaneously and in competition at the same active site. The polypeptide is Ribulose bisphosphate carboxylase large chain (Euglena stellata).